The sequence spans 231 residues: Cytidylate kinase 1 (231 aa).

Residue 7 to 15 (GPSGAGKGT) participates in ATP binding.

This sequence belongs to the cytidylate kinase family. Type 1 subfamily.

The protein resides in the cytoplasm. It catalyses the reaction CMP + ATP = CDP + ADP. The catalysed reaction is dCMP + ATP = dCDP + ADP. This chain is Cytidylate kinase 1, found in Haemophilus influenzae (strain ATCC 51907 / DSM 11121 / KW20 / Rd).